A 172-amino-acid chain; its full sequence is Adenine phosphoribosyltransferase (172 aa).

This sequence belongs to the purine/pyrimidine phosphoribosyltransferase family. As to quaternary structure, homodimer.

Its subcellular location is the cytoplasm. It catalyses the reaction AMP + diphosphate = 5-phospho-alpha-D-ribose 1-diphosphate + adenine. It functions in the pathway purine metabolism; AMP biosynthesis via salvage pathway; AMP from adenine: step 1/1. In terms of biological role, catalyzes a salvage reaction resulting in the formation of AMP, that is energically less costly than de novo synthesis. This Prochlorococcus marinus (strain MIT 9215) protein is Adenine phosphoribosyltransferase.